The following is a 279-amino-acid chain: 3-methyl-2-oxobutanoate hydroxymethyltransferase (279 aa).

Mg(2+)-binding residues include aspartate 49 and aspartate 88. 3-methyl-2-oxobutanoate contacts are provided by residues 49 to 50 (DS), aspartate 88, and lysine 118. Glutamate 120 provides a ligand contact to Mg(2+). Catalysis depends on glutamate 187, which acts as the Proton acceptor.

This sequence belongs to the PanB family. Homodecamer; pentamer of dimers. Mg(2+) serves as cofactor.

Its subcellular location is the cytoplasm. The catalysed reaction is 3-methyl-2-oxobutanoate + (6R)-5,10-methylene-5,6,7,8-tetrahydrofolate + H2O = 2-dehydropantoate + (6S)-5,6,7,8-tetrahydrofolate. It functions in the pathway cofactor biosynthesis; (R)-pantothenate biosynthesis; (R)-pantoate from 3-methyl-2-oxobutanoate: step 1/2. Its function is as follows. Catalyzes the reversible reaction in which hydroxymethyl group from 5,10-methylenetetrahydrofolate is transferred onto alpha-ketoisovalerate to form ketopantoate. The polypeptide is 3-methyl-2-oxobutanoate hydroxymethyltransferase (Agrobacterium fabrum (strain C58 / ATCC 33970) (Agrobacterium tumefaciens (strain C58))).